Reading from the N-terminus, the 621-residue chain is MSNQEYTFQTEINQLLDLMIHSLYSNKEIFLRELISNASDALDKLNYLMLTDEKLKGLNTTPSIHLSFDSQKKTLTIKDNGIGMDKSDLIEHLGTIAKSGTKSFLSALSGDKKKDSALIGQFGVGFYSAFMVASKIVVQTKKVTSHQAYAWVSDGKGKFEISECVKEEQGTEITLFLKEEDSHFASRWEIDSVVKKYSEHIPFPIFLTYTDTKFEGEGDNKKEVKEEKCDQINQASALWKMNKSELKEKDYKDFYQSFAHDNSEPLSYIHNKVEGSLEYTTLFYIPSKAPFDLFRVDYKSGVKLYVKRVFITDDDKELLPSYLRFVKGVIDSEDLPLNVSREILQQNKILANIRSASVKKILSEIERLSKDNKNYHKFYEPFGKVLKEGLYGDFENKEKLLELLRFYSKDKGEWISLKEYKENLKENQKSIYYLLGENLDLLKASPLLEKYAQKGYDVLLLSDEIDAFVMPGVNEYDKTPFRDASHSESLKELGLAEIHDEVKDQFKDLIKAFEENLKDEIKGVELSGHLTSAVALIGDEPNAMMANWMRQMGQSVPESKKTLELNPNHAILQKLLKCEDKEQLSAFIWLLYDGAKLLEKGALKDAKSFNERLNSVLLKAL.

The interval 1-341 (MSNQEYTFQT…SEDLPLNVSR (341 aa)) is a; substrate-binding. Positions 342-547 (EILQQNKILA…GDEPNAMMAN (206 aa)) are b. Positions 548–621 (WMRQMGQSVP…RLNSVLLKAL (74 aa)) are c.

The protein belongs to the heat shock protein 90 family. As to quaternary structure, homodimer.

The protein resides in the cytoplasm. Molecular chaperone. Has ATPase activity. The chain is Chaperone protein HtpG from Helicobacter pylori (strain J99 / ATCC 700824) (Campylobacter pylori J99).